A 128-amino-acid chain; its full sequence is Small ribosomal subunit protein uS9 (128 aa).

Belongs to the universal ribosomal protein uS9 family.

The chain is Small ribosomal subunit protein uS9 from Flavobacterium psychrophilum (strain ATCC 49511 / DSM 21280 / CIP 103535 / JIP02/86).